A 698-amino-acid chain; its full sequence is Elongation factor G (698 aa).

One can recognise a tr-type G domain in the interval 8-290 (ERYRNIGISA…AVIEFLPSPV (283 aa)). Residues 17-24 (AHIDAGKT), 88-92 (DTPGH), and 142-145 (NKMD) each bind GTP.

The protein belongs to the TRAFAC class translation factor GTPase superfamily. Classic translation factor GTPase family. EF-G/EF-2 subfamily.

It is found in the cytoplasm. Its function is as follows. Catalyzes the GTP-dependent ribosomal translocation step during translation elongation. During this step, the ribosome changes from the pre-translocational (PRE) to the post-translocational (POST) state as the newly formed A-site-bound peptidyl-tRNA and P-site-bound deacylated tRNA move to the P and E sites, respectively. Catalyzes the coordinated movement of the two tRNA molecules, the mRNA and conformational changes in the ribosome. This Azoarcus sp. (strain BH72) protein is Elongation factor G.